The following is a 566-amino-acid chain: Putative ABC transporter ATP-binding protein BT9727_2424 (566 aa).

2 consecutive ABC transporter domains span residues 5-246 and 300-533; these read ISFE…GLRE and LKVE…ANLK. Residues 39 to 46 and 333 to 340 contribute to the ATP site; these read GRSGSGKS and GHNGAGKS.

This sequence belongs to the ABC transporter superfamily.

Its subcellular location is the cell membrane. In terms of biological role, probably part of an ABC transporter complex. Responsible for energy coupling to the transport system. The chain is Putative ABC transporter ATP-binding protein BT9727_2424 from Bacillus thuringiensis subsp. konkukian (strain 97-27).